The following is a 455-amino-acid chain: Bleomycin hydrolase (455 aa).

Position 1 is an N-acetylmethionine (M1). Catalysis depends on residues C73 and H372. K391 carries the N6-acetyllysine modification. N396 is an active-site residue.

The protein belongs to the peptidase C1 family. Homohexamer. Interacts with NUDT12 (via ANK repeats).

The protein resides in the cytoplasm. Its subcellular location is the cytoplasmic granule. The catalysed reaction is Inactivates bleomycin B2 (a cytotoxic glycometallopeptide) by hydrolysis of a carboxyamide bond of beta-aminoalanine, but also shows general aminopeptidase activity. The specificity varies somewhat with source, but amino acid arylamides of Met, Leu and Ala are preferred.. Functionally, the normal physiological role of BLM hydrolase is unknown, but it catalyzes the inactivation of the antitumor drug BLM (a glycopeptide) by hydrolyzing the carboxamide bond of its B-aminoalaninamide moiety thus protecting normal and malignant cells from BLM toxicity. The polypeptide is Bleomycin hydrolase (Blmh) (Mus musculus (Mouse)).